Consider the following 162-residue polypeptide: MRLDSAAKALFLKEFVGAFALSMRYFFKPRPTLNYPHEKNPQSPRYRGEHALRRYPNGEERCIACKLCEAICPAKAITIEAGPRRNDGTRRTTRYDIDMVKCIYCGFCQEACPVDAIVEGPNAEFAVETREELYYDKDRLLQNGARWEREIARNIALDAPYR.

4Fe-4S ferredoxin-type domains lie at 52–82 and 93–122; these read LRRY…IEAG and TRYD…EGPN. [4Fe-4S] cluster is bound by residues cysteine 62, cysteine 65, cysteine 68, cysteine 72, cysteine 102, cysteine 105, cysteine 108, and cysteine 112.

The protein belongs to the complex I 23 kDa subunit family. NDH-1 is composed of 14 different subunits. Subunits NuoA, H, J, K, L, M, N constitute the membrane sector of the complex. The cofactor is [4Fe-4S] cluster.

It is found in the cell inner membrane. The catalysed reaction is a quinone + NADH + 5 H(+)(in) = a quinol + NAD(+) + 4 H(+)(out). In terms of biological role, NDH-1 shuttles electrons from NADH, via FMN and iron-sulfur (Fe-S) centers, to quinones in the respiratory chain. The immediate electron acceptor for the enzyme in this species is believed to be ubiquinone. Couples the redox reaction to proton translocation (for every two electrons transferred, four hydrogen ions are translocated across the cytoplasmic membrane), and thus conserves the redox energy in a proton gradient. The polypeptide is NADH-quinone oxidoreductase subunit I (Beijerinckia indica subsp. indica (strain ATCC 9039 / DSM 1715 / NCIMB 8712)).